Consider the following 36-residue polypeptide: Beta/delta/mu-theraphotoxin-Pv1 (36 aa).

Disulfide bonds link cysteine 3–cysteine 17, cysteine 10–cysteine 22, and cysteine 16–cysteine 30. At phenylalanine 36 the chain carries Phenylalanine amide.

It belongs to the neurotoxin 10 (Hwtx-1) family. As to expression, expressed by the venom gland.

It localises to the secreted. In terms of biological role, gating-modifier toxin that targets voltage-gated sodium channels. Inhibits the inactivation of Nav1.7/SCN9A. The sequence is that of Beta/delta/mu-theraphotoxin-Pv1 from Poecilotheria vittata (Ghost ornamental tarantula).